A 284-amino-acid chain; its full sequence is 2-dehydro-3-deoxyphosphooctonate aldolase (284 aa).

The protein belongs to the KdsA family.

The protein localises to the cytoplasm. It carries out the reaction D-arabinose 5-phosphate + phosphoenolpyruvate + H2O = 3-deoxy-alpha-D-manno-2-octulosonate-8-phosphate + phosphate. Its pathway is carbohydrate biosynthesis; 3-deoxy-D-manno-octulosonate biosynthesis; 3-deoxy-D-manno-octulosonate from D-ribulose 5-phosphate: step 2/3. It functions in the pathway bacterial outer membrane biogenesis; lipopolysaccharide biosynthesis. In Bordetella petrii (strain ATCC BAA-461 / DSM 12804 / CCUG 43448), this protein is 2-dehydro-3-deoxyphosphooctonate aldolase.